Consider the following 455-residue polypeptide: Fumarate hydratase class II (455 aa).

Substrate contacts are provided by residues S96 to T98, H122 to D125, S132 to N134, and T180. H181 (proton donor/acceptor) is an active-site residue. S311 is an active-site residue. Residues S312 and K317–N319 each bind substrate.

This sequence belongs to the class-II fumarase/aspartase family. Fumarase subfamily. As to quaternary structure, homotetramer.

The protein resides in the cytoplasm. It carries out the reaction (S)-malate = fumarate + H2O. The protein operates within carbohydrate metabolism; tricarboxylic acid cycle; (S)-malate from fumarate: step 1/1. Its function is as follows. Involved in the TCA cycle. Catalyzes the stereospecific interconversion of fumarate to L-malate. The chain is Fumarate hydratase class II from Listeria monocytogenes serotype 4b (strain F2365).